The primary structure comprises 369 residues: Molybdenum import ATP-binding protein ModC (369 aa).

An ABC transporter domain is found at 3–246 (TRPEQASKDT…LDLPLAHGDS (244 aa)). 44-51 (GPSGSGKT) contacts ATP. The Mop domain maps to 305 to 369 (DTSILNILPA…AQIKGVAILG (65 aa)).

Belongs to the ABC transporter superfamily. Molybdate importer (TC 3.A.1.8) family. In terms of assembly, the complex is composed of two ATP-binding proteins (ModC), two transmembrane proteins (ModB) and a solute-binding protein (ModA).

It is found in the cell inner membrane. It carries out the reaction molybdate(out) + ATP + H2O = molybdate(in) + ADP + phosphate + H(+). In terms of biological role, part of the ABC transporter complex ModABC involved in molybdenum import. Responsible for energy coupling to the transport system. In Albidiferax ferrireducens (strain ATCC BAA-621 / DSM 15236 / T118) (Rhodoferax ferrireducens), this protein is Molybdenum import ATP-binding protein ModC.